The following is a 312-amino-acid chain: Ribonuclease Z (312 aa).

Positions 63, 65, 67, 68, 140, 211, and 269 each coordinate Zn(2+). D67 functions as the Proton acceptor in the catalytic mechanism.

The protein belongs to the RNase Z family. Homodimer. Zn(2+) is required as a cofactor.

It catalyses the reaction Endonucleolytic cleavage of RNA, removing extra 3' nucleotides from tRNA precursor, generating 3' termini of tRNAs. A 3'-hydroxy group is left at the tRNA terminus and a 5'-phosphoryl group is left at the trailer molecule.. Functionally, zinc phosphodiesterase, which displays some tRNA 3'-processing endonuclease activity. Probably involved in tRNA maturation, by removing a 3'-trailer from precursor tRNA. The sequence is that of Ribonuclease Z from Anoxybacillus flavithermus (strain DSM 21510 / WK1).